A 341-amino-acid polypeptide reads, in one-letter code: MLVLGLETSCDETGVALYDSERGLLADALFSQIDLHRAYGGVVPELASRDHVKRMLPLIRQTLAEADCVATDIDAIAYTAGPGLVGALLVGASCAQALAFAWDIPALGVHHMEGHLLAPMLEENPPQFPFVALLVSGGHTQLVRVDGIGQYELLGETLDDAAGEAFDKTAKMMGMQYPGGPEISKAAMQGVAGRFVFPRPMTDRPGLEFSFSGLKTSALNTWQQCRNAGDDSEQTRCDIALAFQQAVVETLTIKCKRALKQTGLKSLVIAGGVSANKALRASLESMLGDLRGHVYYARPEFCTDNGAMIAFAGCQRLQVGQKEDLSISVQARWPMEQLSGL.

2 residues coordinate Fe cation: His-111 and His-115. Substrate contacts are provided by residues 134–138, Asp-167, Gly-180, and Asn-276; that span reads LVSGG. Asp-304 contributes to the Fe cation binding site.

Belongs to the KAE1 / TsaD family. It depends on Fe(2+) as a cofactor.

It is found in the cytoplasm. It carries out the reaction L-threonylcarbamoyladenylate + adenosine(37) in tRNA = N(6)-L-threonylcarbamoyladenosine(37) in tRNA + AMP + H(+). Required for the formation of a threonylcarbamoyl group on adenosine at position 37 (t(6)A37) in tRNAs that read codons beginning with adenine. Is involved in the transfer of the threonylcarbamoyl moiety of threonylcarbamoyl-AMP (TC-AMP) to the N6 group of A37, together with TsaE and TsaB. TsaD likely plays a direct catalytic role in this reaction. This is tRNA N6-adenosine threonylcarbamoyltransferase from Pseudomonas syringae pv. syringae (strain B728a).